Reading from the N-terminus, the 1071-residue chain is Fused isobutyryl-CoA mutase (1071 aa).

One can recognise a B12-binding domain in the interval 12-149; it reads PVRFVTSAAL…QTCDVDLTGE (138 aa). An adenosylcob(III)alamin-binding site is contributed by H25. The GTPase chaperone MeaI stretch occupies residues 153-400; sequence VEAVLAGERT…YQHLLELLGA (248 aa). 203 to 208 is a binding site for GTP; sequence GSGKSS. Residues S207, V232, D233, and D246 each contribute to the Mg(2+) site. R249 is a GTP binding site. Mg(2+) is bound by residues E293 and T294. 340-343 serves as a coordination point for GTP; sequence NKFE. Residues 401–558 are linker; the sequence is RGLPVDEGVL…RSENLPGHFP (158 aa). Substrate is bound by residues F566, R601, R707, Y751, S800, R835, and K840. Residues E952 and N1070 each contribute to the GTP site.

Belongs to the IcmF family. In terms of assembly, homodimer. It depends on adenosylcob(III)alamin as a cofactor. Mg(2+) serves as cofactor.

The catalysed reaction is 2-methylpropanoyl-CoA = butanoyl-CoA. It catalyses the reaction GTP + H2O = GDP + phosphate + H(+). In terms of biological role, catalyzes the reversible interconversion of isobutyryl-CoA and n-butyryl-CoA, using radical chemistry. Also exhibits GTPase activity, associated with its G-protein domain (MeaI) that functions as a chaperone that assists cofactor delivery and proper holo-enzyme assembly. Does not exhibit methylmalonyl-CoA mutase (MCM) activity. The protein is Fused isobutyryl-CoA mutase of Nocardia farcinica (strain IFM 10152).